The sequence spans 1292 residues: Zinc finger protein 423 (1292 aa).

Positions 1–11 are enriched in basic residues; that stretch reads MSRRKQAKPRS. Disordered stretches follow at residues 1-21, 33-70, and 95-125; these read MSRRKQAKPRSVKVEEGEASD, AGGLEGEPECDRKTSRALEDRNSVTSQEERNEDDEDVE, and AHRCPGDGDDDPQLSWVASSPSSKDVASPTQ. A compositionally biased stretch (basic and acidic residues) spans 41–54; it reads ECDRKTSRALEDRN. Phosphoserine is present on residues Ser-55 and Ser-58. The C2H2-type 1; degenerate zinc finger occupies 75–101; that stretch reads YTCDHCQQDFESLADLTDHRAHRCPGD. A compositionally biased stretch (polar residues) spans 110–125; that stretch reads WVASSPSSKDVASPTQ. 7 consecutive C2H2-type zinc fingers follow at residues 146 to 168, 174 to 196, 202 to 224, 230 to 252, 271 to 294, 303 to 326, and 331 to 353; these read YPCQFCDKSFIRLSYLKRHEQIH, FKCTFCSRLFKHKRSRDRHIKLH, YHCHECEAAFSRSDHLKIHLKTH, FKCSVCKRGFSSTSSLQSHMQAH, FMCDYCEDTFSQTEELEKHVLTLH, LQCIHCPEVFVDESTLLAHIHQAH, and HKCPMCPEQFSSVEGVYCHLDSH. Residues 354–407 are disordered; the sequence is RQPDSSNHSVSPDPVLGSVASMSSATPDSSASVERGSTPDSTLKPLRGQKKMRD. A compositionally biased stretch (low complexity) spans 371 to 385; sequence SVASMSSATPDSSAS. The C2H2-type 9; degenerate zinc-finger motif lies at 417-441; the sequence is YSCPYCSKRDFTSLAVLEIHLKTIH. 3 consecutive C2H2-type zinc fingers follow at residues 449–472, 488–511, and 525–548; these read HTCQICLDSMPTLYNLNEHVRKLH, FHCNYCPEMFADINSLQEHIRVSH, and FFCNQCSMGFLTESSLTEHIQQAH. Residues 571-596 form a C2H2-type 13; atypical zinc finger; the sequence is YSCPYCTNSPIFGSILKLTKHIKENH. Positions 598–635 are disordered; the sequence is NIPLAHSKKSKAEQSPVSSDVEVSSPKRQRLSGSANSI. Ser-612 is subject to Phosphoserine. Residues 612-623 show a composition bias toward low complexity; the sequence is SPVSSDVEVSSP. 7 consecutive C2H2-type zinc fingers follow at residues 640–662, 670–692, 700–723, 728–751, 758–781, 789–811, and 815–838; these read YPCNQCDLKFSNFESFQTHLKLH, QACPQCKEDFDSQESLLQHLTVH, YVCESCDKQFSSVDDLQKHLLDMH, YHCTLCQEVFDSKVSIQVHLAVKH, YRCTACNWDFRKEADLQVHVKHSH, HKCIFCGETFSTEVELQCHITTH, and YNCRFCSKAFHAVILLEKHLREKH. Residues 894 to 916 form a C2H2-type 21; degenerate zinc finger; that stretch reads YGCDICGAAYTMEVLLQNHRLRD. 3 C2H2-type zinc fingers span residues 938–960, 967–989, and 1028–1050; these read HKCNVCSRTFFSENGLREHLQTH, YMCPICGERFPSLLTLTEHKVTH, and FRCVVCMQTVTSTLELKIHGTFH. Ser-1062 is subject to Phosphoserine. The C2H2-type 25; degenerate zinc-finger motif lies at 1072-1090; that stretch reads YKCALCLKEFRSKQDLVRL. 5 C2H2-type zinc fingers span residues 1128–1151, 1176–1198, 1206–1228, 1237–1260, and 1267–1290; these read LRCPECNVKFESAEDLESHMQVDH, YQCIKCQMTFENEREIQIHVANH, HECKLCNQMFDSPAKLLCHLIEH, FKCPVCFTVFVQANKLQQHIFAVH, and YDCSQCPQKFFFQTELQNHTMSQH. Residues 1144–1155 are compositionally biased toward basic and acidic residues; the sequence is ESHMQVDHRDLT. The segment at 1144-1171 is disordered; sequence ESHMQVDHRDLTPETSGPRKGAQTSPVP.

It belongs to the krueppel C2H2-type zinc-finger protein family. As to quaternary structure, homodimer. Interacts with SMAD1 and SMAD4. Interacts with EBF1. Interacts with PARP1. Interacts with CEP290. Within the cerebellum, Zfp423 is expressed in both ventricular and external germinal zones. Transiently expressed in newly differentiating olfactory-receptor neurons.

Its subcellular location is the nucleus. Its function is as follows. Transcription factor that can both act as an activator or a repressor depending on the context. Plays a central role in BMP signaling and olfactory neurogenesis. Associates with SMADs in response to BMP2 leading to activate transcription of BMP target genes. Acts as a transcriptional repressor via its interaction with EBF1, a transcription factor involved in terminal olfactory receptor neurons differentiation; this interaction preventing EBF1 to bind DNA and activate olfactory-specific genes. Involved in olfactory neurogenesis by participating in a developmental switch that regulates the transition from differentiation to maturation in olfactory receptor neurons. Controls proliferation and differentiation of neural precursors in cerebellar vermis formation. This is Zinc finger protein 423 (Znf423) from Mus musculus (Mouse).